Consider the following 299-residue polypeptide: Palmitoyltransferase ZDHHC3 (299 aa).

At Met-1 to Cys-47 the chain is on the cytoplasmic side. At Tyr-18 the chain carries Phosphotyrosine. A helical transmembrane segment spans residues Ala-48–Ile-68. At Pro-69–Asp-72 the chain is on the lumenal side. A helical membrane pass occupies residues Tyr-73–Ser-93. At His-94–Tyr-171 the chain is on the cytoplasmic side. One can recognise a DHHC domain in the interval Lys-128–Lys-254. Cys-146 carries S-palmitoyl cysteine lipidation. Catalysis depends on Cys-157, which acts as the S-palmitoyl cysteine intermediate. Residues Phe-172–Phe-192 form a helical membrane-spanning segment. Residues His-193 to Val-214 lie on the Lumenal side of the membrane. Residues Ile-215 to Phe-235 traverse the membrane as a helical segment. At Gly-236–Val-299 the chain is on the cytoplasmic side.

The protein belongs to the DHHC palmitoyltransferase family. As to quaternary structure, monomer. Homooligomers. The monomeric form has a higher catalytic activity. Forms heterooligomers with ZDHHC7. Interacts with TNFRSF10A. Phosphorylation by FGFR1 and SRC probably regulates the palmitoyltransferase activity. In terms of processing, autopalmitoylated.

It localises to the golgi apparatus membrane. It catalyses the reaction L-cysteinyl-[protein] + hexadecanoyl-CoA = S-hexadecanoyl-L-cysteinyl-[protein] + CoA. The catalysed reaction is L-cysteinyl-[protein] + tetradecanoyl-CoA = S-tetradecanoyl-L-cysteinyl-[protein] + CoA. The enzyme catalyses L-cysteinyl-[protein] + octadecanoyl-CoA = S-octadecanoyl-L-cysteinyl-[protein] + CoA. In terms of biological role, golgi-localized palmitoyltransferase that catalyzes the addition of palmitate onto various protein substrates. Has no stringent fatty acid selectivity and in addition to palmitate can also transfer onto target proteins myristate from tetradecanoyl-CoA and stearate from octadecanoyl-CoA. Plays an important role in G protein-coupled receptor signaling pathways involving GNAQ and potentially other heterotrimeric G proteins by regulating their dynamic association with the plasma membrane. Palmitoylates ITGA6 and ITGB4, thereby regulating the alpha-6/beta-4 integrin localization, expression and function in cell adhesion to laminin. Plays a role in the TRAIL-activated apoptotic signaling pathway most probably through the palmitoylation and localization to the plasma membrane of TNFRSF10A. In the brain, by palmitoylating the gamma subunit GABRG2 of GABA(A) receptors and regulating their postsynaptic accumulation, plays a role in synaptic GABAergic inhibitory function and GABAergic innervation. Palmitoylates the neuronal protein GAP43 which is also involved in the formation of GABAergic synapses. Palmitoylates NCDN thereby regulating its association with endosome membranes. Probably palmitoylates PRCD and is involved in its proper localization within the photoreceptor. Could mediate the palmitoylation of NCAM1 and regulate neurite outgrowth. Could palmitoylate DNAJC5 and regulate its localization to Golgi membranes. Also constitutively palmitoylates DLG4. May also palmitoylate SNAP25. Could palmitoylate the glutamate receptors GRIA1 and GRIA2 but this has not been confirmed in vivo. Could also palmitoylate the D(2) dopamine receptor DRD2. May also palmitoylate LAMTOR1, promoting its localization to lysosomal membranes. Palmitoylates the Toll-like receptor 9/TLR9 in the Golgi and thereby regulates TLR9 trafficking to endosomes. May palmitoylate CALHM1 and CALHM3 subunits of gustatory voltage-gated ion channels and modulate channel gating and kinetics. In Rattus norvegicus (Rat), this protein is Palmitoyltransferase ZDHHC3.